The following is a 231-amino-acid chain: Endonuclease NucS (231 aa).

The protein belongs to the NucS endonuclease family.

The protein resides in the cytoplasm. Functionally, cleaves both 3' and 5' ssDNA extremities of branched DNA structures. The protein is Endonuclease NucS of Arthrobacter sp. (strain FB24).